The following is a 205-amino-acid chain: Probable GTP-binding protein EngB (205 aa).

In terms of domain architecture, EngB-type G spans 29-203 (QGAEIAFIGR…KAVLSQWFSS (175 aa)). Residues 37–44 (GRSNAGKS), 64–68 (GRTQM), 82–85 (DLPG), 149–152 (TKSD), and 182–184 (FSS) contribute to the GTP site. The Mg(2+) site is built by Ser-44 and Thr-66.

This sequence belongs to the TRAFAC class TrmE-Era-EngA-EngB-Septin-like GTPase superfamily. EngB GTPase family. The cofactor is Mg(2+).

In terms of biological role, necessary for normal cell division and for the maintenance of normal septation. The polypeptide is Probable GTP-binding protein EngB (Coxiella burnetii (strain CbuK_Q154) (Coxiella burnetii (strain Q154))).